The chain runs to 2715 residues: MDLVITQELARAESQQDAASLKKAYELIKSANLGKSEFDPSESFSPDLFVLCAEQALKMRQPEVSEDCIQMYFKVKAPITQFLGRAHLCRAQMCAPKSAENLEEFENCVTEYMKAINFAKGEPRYYFLVYNASVLYWQMVRPFLKPGYRHHLIPSLSQIINVLSQTEEEDKEWRAELMLELLECYLQAGRKEEAARFCSTAAPFIKSHVPQKYRQIFSVMVRHELMDELQLKEEKKNSISLSVTFYINMLKAKAEQNDLPGDISVILRKAYRHLGHYNHQRFPSISEEKMLLLFELARFSLTLKCMEISSACLSDLKKMESKDPGKLIEMECLECESEALRLESKMKVYNRAAVEAQLDIIQRLDVALQRAVRLGDPRVIHVVCATQWNTCLPLLQHNLRHHLRKPLAGVADVLEKLDSLMTLLRCQVHMEMAQIEEDEDRLEPATEHLRKAARLDSLGLYRDRIQMASTRLRLCTTLYQAPERAEDKAIMAVEQAKKATPKDSVRKKRALLVNAGLALAPDAFQIVLDSENEAKVSTGKNRGRFTYLCAKAWHHTVSVDKAAGHLRRLGNENDKERIQIWAELAKVARKQGVWDVCRTASRFCLLYDNVKVKKLRLRRGKKKRGRDGSVQDTWSQPEVVLQRQVCPDLLRKFAEVGFIHAEATVHLLRSEGVELNDRAIPPEDLSQHPAGYVPEPPEVNAEWITYRTWIESLSRCAMNNWLRSAEIGQEIQEAWIVQNAVVYVLNHNHHLILAGRQKELVDALYHLLSIVKATGHSGDPVMLVTLCNTLARGLIISWIPVQAAEKSRKFMRPNAFHSPLDAGATSEIKTAVEVCEFALNLTNGSAPEETVPTGTRQQLIATWVKAKQLLQQQIGPRLGTEEQGTNEDVSSVTRVLVALEMYSCNGLGLMDFTVPSLAQLVKMASECNWSDPLVELQTLTRLTHFAHAARDHETTMACAHRALEMGIKYLKKFGPEESRLVAEMLCTATAIQGRSIMENLKGRKQLRLVAAKAFTESARFGGIAGSSALVMLAARHYWNAWLPLLSSAVYRKKAKGALKRLIGIINKTEARKQEKGKTLLLHQWPTADFQGGGTTEGYFLPGAEDDLALRAALYGLLFHSHADQDDWEGGLKVLDEAVQVLPRTAHRLLIFKHMVIVKAKLGQNFSMEIQKFKAESEDYLARMWHRLALNSPSVSGELACYNNAIQALQKPEMEWQKVEYLMEFGQWLHHRHFPLEDVVFHLRWAVEILLAMKPPGDVPEPQPTPDGEYVAVEMPPRSPVSEAEEAVSLEQLRSVRQLEALARVHILLALVLSPGAEGYEDCCLAAYAFFRHIWQVSLMTAGKSVLENRPLAATSSHLLLPKKEKENERSKEKEKERSKEKENERSKEKDKEKGKEEKVKEPKQSQSPAPIKQLEDLPMSIEEWASYSCPEEVLSVLKQDRSDSTVNPSSIQKPTYSLYFLDHLVKALQKMCLHELTVPVLQLGVLISDSVVGSKGLSDLYHLRLAHACSELKLREAAARHEEAVGQVCVSELEQASCRKEIALKKEKNKEPLLEESLPALNEQTLPVQPGEIKPLDAKDKILKMNGETGRDLDGTSFPHLWMLKAEVLLEMNLYQPARLLLSEAYLAFQELDEPCAEAQCLLLLAQLANKEKNYGQAKKMIAQAQHLGGSEEFWYNSTLTLAEALLSMEHSGREATVCHIFQKLINAFKILKKERPNRLPLLEFMITDLEARCLSLRVRVAQHSAVTEPTECSLLLKEMDDGLLEIERKFIDCGCKENCVDVKLERAKIKRLRAQNEKDEEQKTAYYLEAYGLAQGAVAEEEGRLHSIQGLYGLAQGAMAEEEGRLHSVQGLLSLQDLQNVNTPLMRKLARLKLGLVEMALDMLQFIWEEAHGQQSEQGSLEKLLADYLQNTSDYTSVGLQWFTLKRTLAHGALAQLGSLQPLSVGCVEIRARLLGLAGRALHLLAMQADPVHPTCYWEAGPSVGAKLSGLKSLELEVEEEGATKSSRDPPASRAAPEEHCRRGEDLKRRMVLAQQYLAQASEVLLQCLQVALGSGLLDVAAAASLEMVECVGTLDPATTCQFLALSQSCSASETMRDVLLAATANTSSSQLAALLQLQHQLRCQDRTTTSLGARVEQRLAAVSKAWQNLCVTEQHFNLLNEMPPTFWILFLHLSGDRSRLYGAAYEKPKFITAAKGKVQAVGGSCKVMRLAISPTAFSHLLACAQQFRKQTQAQVYSEDMALNIGSEPEGLQVEEKERPVQRLSSVLGPLEELLQPLFPLLSLSKARVQTPAVVADSGKSKGKDKERKTSTGQHSTVQPEVADKIVLVADRHLLELPLEGLSVFDEGTISSVSREFSLQMLWNRLHKEETEGGVKKEGRSRDPKKRSLAKKGRKGSIPRTIPPDCIIVDSDNFKFVVDPYEEAQGPEMLTPVSITQDILERFQDTFTSRWAGHLGSKHFPSQAQWEQALGSCSGFFFYGMESFLSHILVERLVAMNLQECQVAVLLDLARSYQSLKRHMESVEHRRSVGRWEANWRNSASPSEDEWRRGGEPRRGFSDLEGQAAAAPKLRAPSHHAQLGPVWAAAPSHRVVQAWTCLPSAAGAPALASALGSAPLPTHPHLPAPIPSSQLALPFLGLSPALGAASARDPPPATSRKAAAWTSSSACLCAPWGLRRGWSCVSSRGQDKGGLPLAALVLSCLDQKTIQTVSLFLI.

TPR repeat units follow at residues Cys89–Glu122, Ala175–His208, Gly261–Glu295, Pro324–Asp359, Cys426–Gly459, Ser469–Asp503, Ser807–Ser845, Leu936–Tyr969, Ala1111–Thr1144, and Ala1174–Pro1211. The interval Ser1356–Lys1412 is disordered. A compositionally biased stretch (basic and acidic residues) spans Pro1361 to Lys1403. Residues Lys1362–Glu1401 adopt a coiled-coil conformation. Residues Ala1639–Glu1672 form a TPR 11 repeat. Positions Val1781 to Glu1810 form a coiled coil. 3 disordered regions span residues Glu2000–Arg2023, Ala2294–Val2319, and Glu2371–Ile2399. Composition is skewed to basic and acidic residues over residues Gly2300–Thr2311 and Glu2371–Arg2383. Basic residues predominate over residues Asp2384–Ser2398. 2 TPR repeats span residues Ile2399–Thr2432 and Val2504–Trp2537. The segment at Ala2541 to Ala2567 is disordered. Basic and acidic residues predominate over residues Asp2546 to Ser2559.

It belongs to the CFAP46 family.

The protein localises to the cytoplasm. It localises to the cytoskeleton. Its subcellular location is the cilium axoneme. In terms of biological role, as part of the central apparatus of the cilium axoneme plays a role in cilium movement. This chain is Cilia- and flagella-associated protein 46, found in Homo sapiens (Human).